The chain runs to 146 residues: General odorant-binding protein 19a (146 aa).

Positions 1–22 are cleaved as a signal peptide; it reads MKFHLLLVCVAISLGPIPQSEA. Intrachain disulfides connect C40–C72, C68–C126, and C113–C135.

This sequence belongs to the PBP/GOBP family. In terms of tissue distribution, expressed in adult olfactory system. Expressed exclusively in a subset of chemosensory sensilla on the third antennal segment.

It is found in the secreted. Present in the aqueous fluid surrounding olfactory sensory dendrites and are thought to aid in the capture and transport of hydrophobic odorants into and through this fluid. This is General odorant-binding protein 19a (Obp19a) from Drosophila melanogaster (Fruit fly).